The primary structure comprises 865 residues: Outer membrane usher protein HtrE (865 aa).

The first 29 residues, 1-29 (MTIEYTKNYHHLTRIATFCALLYCNTAFS), serve as a signal peptide directing secretion. Residues Cys838 and Cys862 are joined by a disulfide bond.

It belongs to the fimbrial export usher family.

Its subcellular location is the cell outer membrane. In terms of biological role, part of the yadCKLM-htrE-yadVN fimbrial operon. Could contribute to adhesion to various surfaces in specific environmental niches. Probably involved in the export and assembly of fimbrial subunits across the outer membrane. The protein is Outer membrane usher protein HtrE (htrE) of Escherichia coli (strain K12).